The sequence spans 147 residues: Hemoglobin subunit beta (147 aa).

V2 carries the post-translational modification N-acetylvaline. One can recognise a Globin domain in the interval 3-147; that stretch reads HLTGEEKGIV…VATALAHKYH (145 aa). T13 bears the Phosphothreonine mark. At S45 the chain carries Phosphoserine. K60 carries the post-translational modification N6-acetyllysine. H64 contributes to the heme b binding site. At K83 the chain carries N6-acetyllysine. H93 contributes to the heme b binding site. C94 is modified (S-nitrosocysteine). K145 is subject to N6-acetyllysine.

Belongs to the globin family. Heterotetramer of two alpha chains and two beta chains. In terms of tissue distribution, red blood cells.

Involved in oxygen transport from the lung to the various peripheral tissues. This is Hemoglobin subunit beta (HBB) from Rhinolophus ferrumequinum (Greater horseshoe bat).